The sequence spans 184 residues: Adenine phosphoribosyltransferase 2 (184 aa).

Belongs to the purine/pyrimidine phosphoribosyltransferase family. In terms of assembly, homodimer.

Its subcellular location is the cytoplasm. It carries out the reaction AMP + diphosphate = 5-phospho-alpha-D-ribose 1-diphosphate + adenine. It functions in the pathway purine metabolism; AMP biosynthesis via salvage pathway; AMP from adenine: step 1/1. Functionally, catalyzes a salvage reaction resulting in the formation of AMP, that is energically less costly than de novo synthesis. This chain is Adenine phosphoribosyltransferase 2, found in Rhizobium etli (strain ATCC 51251 / DSM 11541 / JCM 21823 / NBRC 15573 / CFN 42).